A 478-amino-acid polypeptide reads, in one-letter code: Protein nucleotidyltransferase YdiU (478 aa).

ATP-binding residues include G84, G86, R87, K107, D119, G120, R170, and R177. Catalysis depends on D246, which acts as the Proton acceptor. Residues N247 and D256 each contribute to the Mg(2+) site. Residue D256 coordinates ATP.

This sequence belongs to the SELO family. The cofactor is Mg(2+). It depends on Mn(2+) as a cofactor.

It catalyses the reaction L-seryl-[protein] + ATP = 3-O-(5'-adenylyl)-L-seryl-[protein] + diphosphate. The enzyme catalyses L-threonyl-[protein] + ATP = 3-O-(5'-adenylyl)-L-threonyl-[protein] + diphosphate. It carries out the reaction L-tyrosyl-[protein] + ATP = O-(5'-adenylyl)-L-tyrosyl-[protein] + diphosphate. The catalysed reaction is L-histidyl-[protein] + UTP = N(tele)-(5'-uridylyl)-L-histidyl-[protein] + diphosphate. It catalyses the reaction L-seryl-[protein] + UTP = O-(5'-uridylyl)-L-seryl-[protein] + diphosphate. The enzyme catalyses L-tyrosyl-[protein] + UTP = O-(5'-uridylyl)-L-tyrosyl-[protein] + diphosphate. Functionally, nucleotidyltransferase involved in the post-translational modification of proteins. It can catalyze the addition of adenosine monophosphate (AMP) or uridine monophosphate (UMP) to a protein, resulting in modifications known as AMPylation and UMPylation. This is Protein nucleotidyltransferase YdiU from Shigella boydii serotype 18 (strain CDC 3083-94 / BS512).